We begin with the raw amino-acid sequence, 425 residues long: RNA-binding protein L (425 aa).

Positions 1–20 (MQQPPSQPQPGMGGPPPPPQ) are enriched in pro residues. Residues 1–82 (MQQPPSQPQP…AAPPPQAMPA (82 aa)) form a disordered region. Positions 21 to 31 (GAAGQPPQWGA) are enriched in low complexity. The span at 32 to 80 (IPPPMPPHQYGAPPPQQPPAMWGQPPPQAHYGQVPPPQPYYAAPPPQAM) shows a compositional bias: pro residues. 3 RRM domains span residues 90 to 170 (KTLW…WASA), 180 to 259 (YTIF…PAAN), and 284 to 356 (TTIF…WGRS).

The protein belongs to the polyadenylate-binding RBP45 family. In terms of assembly, interacts with RBP-P. Interacts with RAB5A.

It is found in the nucleus. The protein resides in the cytoplasm. RNA-binding protein that binds to a cis-localization element or zipcode, within the 5'-CDS of prolamine RNA. Binds strongly to glutelin and prolamin mRNAs, particularly to 3'-UTR and zipcode RNA. Recognizes and binds to glutelin zipcode RNA, which is required for proper mRNA localization to cisternal endoplasmic reticulum. Recognizes and binds to prolamin zipcode RNA, which is required for proper mRNA localization to the protein body endoplasmic reticulum that delimits the prolamine intracisternal inclusion granules. Required for the correct localization of glutelin and prolamine mRNA in endosperm cells during grain development. RBP-L and RBP-P form a quaternary complex with the membrane trafficking factors NSF and RAB5A. This quaternay complex carries glutelin mRNAs for active transport on endosomes to the cortical endoplasmic reticulum membrane, and enables endosome-mediated glutelin mRNA transport in endosperm cells. This Oryza sativa subsp. japonica (Rice) protein is RNA-binding protein L.